Consider the following 205-residue polypeptide: N-(5'-phosphoribosyl)anthranilate isomerase (205 aa).

Belongs to the TrpF family.

It carries out the reaction N-(5-phospho-beta-D-ribosyl)anthranilate = 1-(2-carboxyphenylamino)-1-deoxy-D-ribulose 5-phosphate. It participates in amino-acid biosynthesis; L-tryptophan biosynthesis; L-tryptophan from chorismate: step 3/5. This chain is N-(5'-phosphoribosyl)anthranilate isomerase, found in Maridesulfovibrio salexigens (strain ATCC 14822 / DSM 2638 / NCIMB 8403 / VKM B-1763) (Desulfovibrio salexigens).